The primary structure comprises 347 residues: NADH-quinone oxidoreductase subunit H (347 aa).

The next 9 membrane-spanning stretches (helical) occupy residues 22-42 (GVVSIKVIALIICLLLATAYL), 59-79 (PSLAGPFGLLQPIADAVKLVF), 93-113 (FIIAPIITFVLSLLGWSVIPI), 124-144 (IGGILFILAVTSLGVYGIIIA), 171-191 (MALSIVAVLIVTGEMDLIQIV), 198-218 (PIWLTIMMLPLAVIYFISILA), 240-260 (VEYSSMAFAMFFLGEYANMIL), 285-305 (IPGYIWFILKVSMVLFCFLWI), and 321-341 (GLKVFLPIVLAWIIVVSAILV).

Belongs to the complex I subunit 1 family. NDH-1 is composed of 14 different subunits. Subunits NuoA, H, J, K, L, M, N constitute the membrane sector of the complex.

Its subcellular location is the cell inner membrane. The catalysed reaction is a quinone + NADH + 5 H(+)(in) = a quinol + NAD(+) + 4 H(+)(out). Functionally, NDH-1 shuttles electrons from NADH, via FMN and iron-sulfur (Fe-S) centers, to quinones in the respiratory chain. The immediate electron acceptor for the enzyme in this species is believed to be ubiquinone. Couples the redox reaction to proton translocation (for every two electrons transferred, four hydrogen ions are translocated across the cytoplasmic membrane), and thus conserves the redox energy in a proton gradient. This subunit may bind ubiquinone. The sequence is that of NADH-quinone oxidoreductase subunit H from Orientia tsutsugamushi (strain Ikeda) (Rickettsia tsutsugamushi).